A 260-amino-acid polypeptide reads, in one-letter code: Hydroxyethylthiazole kinase (260 aa).

A substrate-binding site is contributed by Met49. ATP is bound by residues Arg124 and Thr170. Gly197 serves as a coordination point for substrate.

It belongs to the Thz kinase family. The cofactor is Mg(2+).

It catalyses the reaction 5-(2-hydroxyethyl)-4-methylthiazole + ATP = 4-methyl-5-(2-phosphooxyethyl)-thiazole + ADP + H(+). It participates in cofactor biosynthesis; thiamine diphosphate biosynthesis; 4-methyl-5-(2-phosphoethyl)-thiazole from 5-(2-hydroxyethyl)-4-methylthiazole: step 1/1. Functionally, catalyzes the phosphorylation of the hydroxyl group of 4-methyl-5-beta-hydroxyethylthiazole (THZ). The chain is Hydroxyethylthiazole kinase from Yersinia enterocolitica serotype O:8 / biotype 1B (strain NCTC 13174 / 8081).